We begin with the raw amino-acid sequence, 330 residues long: Ketol-acid reductoisomerase (NADP(+)) (330 aa).

Residues 2–182 form the KARI N-terminal Rossmann domain; the sequence is VKIFYDKDVT…GLTKVGVIQT (181 aa). NADP(+) contacts are provided by residues 25 to 28, Arg48, Ser53, and 83 to 86; these read YGSQ and DEVQ. His108 is an active-site residue. Gly134 lines the NADP(+) pocket. The KARI C-terminal knotted domain occupies 183–328; the sequence is TFREETETDL…KELRKMCGLE (146 aa). Mg(2+)-binding residues include Asp191, Glu195, Glu227, and Glu231. Residue Ser252 coordinates substrate.

Belongs to the ketol-acid reductoisomerase family. Requires Mg(2+) as cofactor.

The catalysed reaction is (2R)-2,3-dihydroxy-3-methylbutanoate + NADP(+) = (2S)-2-acetolactate + NADPH + H(+). It carries out the reaction (2R,3R)-2,3-dihydroxy-3-methylpentanoate + NADP(+) = (S)-2-ethyl-2-hydroxy-3-oxobutanoate + NADPH + H(+). It functions in the pathway amino-acid biosynthesis; L-isoleucine biosynthesis; L-isoleucine from 2-oxobutanoate: step 2/4. It participates in amino-acid biosynthesis; L-valine biosynthesis; L-valine from pyruvate: step 2/4. Its function is as follows. Involved in the biosynthesis of branched-chain amino acids (BCAA). Catalyzes an alkyl-migration followed by a ketol-acid reduction of (S)-2-acetolactate (S2AL) to yield (R)-2,3-dihydroxy-isovalerate. In the isomerase reaction, S2AL is rearranged via a Mg-dependent methyl migration to produce 3-hydroxy-3-methyl-2-ketobutyrate (HMKB). In the reductase reaction, this 2-ketoacid undergoes a metal-dependent reduction by NADPH to yield (R)-2,3-dihydroxy-isovalerate. The chain is Ketol-acid reductoisomerase (NADP(+)) from Methanocaldococcus jannaschii (strain ATCC 43067 / DSM 2661 / JAL-1 / JCM 10045 / NBRC 100440) (Methanococcus jannaschii).